Here is a 166-residue protein sequence, read N- to C-terminus: D-aminoacyl-tRNA deacylase (166 aa).

Residues 142–143 carry the Gly-cisPro motif, important for rejection of L-amino acids motif; the sequence is GP.

Belongs to the DTD family. In terms of assembly, homodimer.

It is found in the cytoplasm. It carries out the reaction glycyl-tRNA(Ala) + H2O = tRNA(Ala) + glycine + H(+). The enzyme catalyses a D-aminoacyl-tRNA + H2O = a tRNA + a D-alpha-amino acid + H(+). Its function is as follows. An aminoacyl-tRNA editing enzyme that deacylates mischarged D-aminoacyl-tRNAs. Also deacylates mischarged glycyl-tRNA(Ala), protecting cells against glycine mischarging by AlaRS. Acts via tRNA-based rather than protein-based catalysis; rejects L-amino acids rather than detecting D-amino acids in the active site. By recycling D-aminoacyl-tRNA to D-amino acids and free tRNA molecules, this enzyme counteracts the toxicity associated with the formation of D-aminoacyl-tRNA entities in vivo and helps enforce protein L-homochirality. This chain is D-aminoacyl-tRNA deacylase, found in Ralstonia nicotianae (strain ATCC BAA-1114 / GMI1000) (Ralstonia solanacearum).